Consider the following 474-residue polypeptide: Aspartyl/glutamyl-tRNA(Asn/Gln) amidotransferase subunit B (474 aa).

Belongs to the GatB/GatE family. GatB subfamily. Heterotrimer of A, B and C subunits.

It carries out the reaction L-glutamyl-tRNA(Gln) + L-glutamine + ATP + H2O = L-glutaminyl-tRNA(Gln) + L-glutamate + ADP + phosphate + H(+). The catalysed reaction is L-aspartyl-tRNA(Asn) + L-glutamine + ATP + H2O = L-asparaginyl-tRNA(Asn) + L-glutamate + ADP + phosphate + 2 H(+). In terms of biological role, allows the formation of correctly charged Asn-tRNA(Asn) or Gln-tRNA(Gln) through the transamidation of misacylated Asp-tRNA(Asn) or Glu-tRNA(Gln) in organisms which lack either or both of asparaginyl-tRNA or glutaminyl-tRNA synthetases. The reaction takes place in the presence of glutamine and ATP through an activated phospho-Asp-tRNA(Asn) or phospho-Glu-tRNA(Gln). This Lactiplantibacillus plantarum (strain ATCC BAA-793 / NCIMB 8826 / WCFS1) (Lactobacillus plantarum) protein is Aspartyl/glutamyl-tRNA(Asn/Gln) amidotransferase subunit B.